The following is a 211-amino-acid chain: Protein Nef (211 aa).

The interval 1-38 (MGNAWSKSKFAGWSEVRDRMRRSSSDPQQPCAPGVGAV) is disordered. A lipid anchor (N-myristoyl glycine; by host) is attached at Gly2. Ser6 bears the Phosphoserine; by host mark. The span at 15-24 (EVRDRMRRSS) shows a compositional bias: basic and acidic residues. Positions 67–70 (KDED) are acidic; interacts with host PACS1 and PACS2; stabilizes the interaction of NEF/MHC-I with host AP1M1; necessary for MHC-I internalization. Residues 74–83 (PVRPQVPLRP) form an SH3-binding; interaction with Src family tyrosine kinases region. The PxxP; stabilizes the interaction of NEF/MHC-I with host AP1M1; necessary for MHC-I internalization signature appears at 77-80 (PQVP). Residues 113-129 (EILDLWIYHTQGFFPDW) are mediates dimerization, Nef-PTE1 interaction. The tract at residues 153 to 186 (VSAEEAERLGNTNEDASLLHPACNHGAEDAHGEI) is binding to ATP6V1H. Positions 170-171 (LL) match the Dileucine internalization motif; necessary for CD4 internalization motif. The Diacidic; necessary for CD4 internalization motif lies at 180–181 (ED).

Belongs to the lentivirus primate group Nef protein family. In terms of assembly, monomer; cytosolic form. Homodimer; membrane bound form. Interacts with Nef associated p21-activated kinase (PAK2); this interaction activates PAK2. Associates with the Nef-MHC-I-AP1 complex; this complex is required for MHC-I internalization. Interacts (via C-terminus) with host PI3-kinase. Interacts with host PACS1; this interaction seems to be weak. Interacts with host PACS2. Interacts with host LCK and MAPK3; these interactions inhibit the kinase activity of the latter. Interacts with host ATP6V1H; this interaction may play a role in CD4 endocytosis. Associates with the CD4-Nef-AP2 complex; this complex is required for CD4 internalization. Interacts with host AP2 subunit alpha and AP2 subunit sigma2. Interacts with TCR-zeta chain; this interaction up-regulates the Fas ligand (FasL) surface expression. Interacts with host HCK, LYN, and SRC; these interactions activate the Src family kinases. Interacts with MAP3K5; this interaction inhibits the Fas and TNFR-mediated death signals. Interacts with beta-COP and PTE1. Interacts with human RACK1; this increases Nef phosphorylation by PKC. Interacts with TP53; this interaction decreases the half-life of TP53, protecting the infected cell against p53-mediated apoptosis. The virion-associated Nef proteins are cleaved by the viral protease to release the soluble C-terminal core protein. Nef is probably cleaved concomitantly with viral structural proteins on maturation of virus particles. In terms of processing, myristoylated. Post-translationally, phosphorylated on serine residues, probably by host PKCdelta and theta.

Its subcellular location is the host cell membrane. The protein localises to the virion. It is found in the secreted. It localises to the host Golgi apparatus membrane. Factor of infectivity and pathogenicity, required for optimal virus replication. Alters numerous pathways of T-lymphocyte function and down-regulates immunity surface molecules in order to evade host defense and increase viral infectivity. Alters the functionality of other immunity cells, like dendritic cells, monocytes/macrophages and NK cells. In terms of biological role, in infected CD4(+) T-lymphocytes, down-regulates the surface MHC-I, mature MHC-II, CD4, CD28, CCR5 and CXCR4 molecules. Mediates internalization and degradation of host CD4 through the interaction of with the cytoplasmic tail of CD4, the recruitment of AP-2 (clathrin adapter protein complex 2), internalization through clathrin coated pits, and subsequent transport to endosomes and lysosomes for degradation. Diverts host MHC-I molecules to the trans-Golgi network-associated endosomal compartments by an endocytic pathway to finally target them for degradation. MHC-I down-regulation may involve AP-1 (clathrin adapter protein complex 1) or possibly Src family kinase-ZAP70/Syk-PI3K cascade recruited by PACS2. In consequence infected cells are masked for immune recognition by cytotoxic T-lymphocytes. Decreasing the number of immune receptors also prevents reinfection by more HIV particles (superinfection). Down-regulates host SERINC3 and SERINC5 thereby excluding these proteins from the viral particles. Virion infectivity is drastically higher when SERINC3 or SERINC5 are excluded from the viral envelope, because these host antiviral proteins impair the membrane fusion event necessary for subsequent virion penetration. Its function is as follows. Bypasses host T-cell signaling by inducing a transcriptional program nearly identical to that of anti-CD3 cell activation. Interaction with TCR-zeta chain up-regulates the Fas ligand (FasL). Increasing surface FasL molecules and decreasing surface MHC-I molecules on infected CD4(+) cells send attacking cytotoxic CD8+ T-lymphocytes into apoptosis. Functionally, plays a role in optimizing the host cell environment for viral replication without causing cell death by apoptosis. Protects the infected cells from apoptosis in order to keep them alive until the next virus generation is ready to strike. Inhibits the Fas and TNFR-mediated death signals by blocking MAP3K5/ASK1. Decreases the half-life of TP53, protecting the infected cell against p53-mediated apoptosis. Inhibits the apoptotic signals regulated by the Bcl-2 family proteins through the formation of a Nef/PI3-kinase/PAK2 complex that leads to activation of PAK2 and induces phosphorylation of host BAD. Extracellular Nef protein targets CD4(+) T-lymphocytes for apoptosis by interacting with CXCR4 surface receptors. This is Protein Nef from Human immunodeficiency virus type 1 group O (isolate MVP5180) (HIV-1).